The following is a 912-amino-acid chain: Cadherin-2 (912 aa).

The N-terminal stretch at 1–28 (MCRIAGTPPRILPPLALMLLAALQQAPI) is a signal peptide. Residues 29 to 164 (KATCEDMLCK…DSSHLKRQKR (136 aa)) constitute a propeptide that is removed on maturation. 5 consecutive Cadherin domains span residues 165-272 (DWVI…RPEF), 273-387 (LHQV…PPEF), 388-502 (TAMT…SPYF), 503-609 (VPNP…DNAP), and 610-720 (QVNP…DVDR). The Extracellular portion of the chain corresponds to 165-729 (DWVIPPINLP…RIVGAGLGTG (565 aa)). Residues Glu175, Asp231, Glu233, Asp264, Met265, Asn266, Asp267, and Asn268 each contribute to the Ca(2+) site. Asn278 is a glycosylation site (N-linked (GlcNAc...) asparagine). Residues Asp298, Asp300, and Asn306 each coordinate Ca(2+). Asn330 is a glycosylation site (N-linked (GlcNAc...) asparagine). Residue Asp358 participates in Ca(2+) binding. N-linked (GlcNAc...) asparagine glycans are attached at residues Asn407, Asn578, Asn628, and Asn657. The chain crosses the membrane as a helical span at residues 730-752 (AIIAILLCIIILLILVLMFVVWM). Topologically, residues 753–912 (KRRDKERQAK…LADMYGGGDD (160 aa)) are cytoplasmic. Residues 869–886 (SGSTAGSLSSLNSSSSGG) are compositionally biased toward low complexity. The disordered stretch occupies residues 869 to 890 (SGSTAGSLSSLNSSSSGGEQDY).

As to quaternary structure, homodimer (via extracellular region). Can also form heterodimers with other cadherins (via extracellular region). Dimerization occurs in trans, i.e. with a cadherin chain from another cell. Interacts with CTNNA2. As to expression, expressed at intercalated disks in the heart (at protein level).

Its subcellular location is the cell membrane. It is found in the sarcolemma. The protein resides in the cell junction. It localises to the cell surface. The protein localises to the desmosome. Its subcellular location is the adherens junction. Functionally, calcium-dependent cell adhesion protein; preferentially mediates homotypic cell-cell adhesion. Cadherins may thus contribute to the sorting of heterogeneous cell types, and thereby play an important role during embryonic development. Required for proper neurite branching, and pre- and postsynaptic organization. In Gallus gallus (Chicken), this protein is Cadherin-2 (CDH2).